The primary structure comprises 171 residues: UPF0398 protein spyM18_1659 (171 aa).

Belongs to the UPF0398 family.

This chain is UPF0398 protein spyM18_1659, found in Streptococcus pyogenes serotype M18 (strain MGAS8232).